The primary structure comprises 1239 residues: Anillin (1239 aa).

4 disordered regions span residues cysteine 32 to glycine 67, glutamate 230 to glutamine 265, phenylalanine 493 to glycine 621, and glycine 684 to serine 716. Residues arginine 53–alanine 63 are compositionally biased toward low complexity. The interaction with and bundling of F-actin stretch occupies residues glutamate 126 to glutamine 371. A compositionally biased stretch (basic and acidic residues) spans proline 252 to glutamine 265. Low complexity predominate over residues serine 500–arginine 518. Pro residues predominate over residues proline 519 to isoleucine 528. Residues glutamate 551–arginine 563 are compositionally biased toward basic and acidic residues. Acidic residues predominate over residues aspartate 594–glutamine 610. Positions alanine 699–serine 716 are enriched in polar residues. Residue serine 712 is modified to Phosphoserine. Threonine 740 bears the Phosphothreonine mark. Phosphoserine occurs at positions 744 and 754. Phosphothreonine is present on threonine 831. A coiled-coil region spans residues aspartate 834–valine 861. Positions serine 1106–threonine 1230 constitute a PH domain.

Interacts with and bundles F-actin. As to expression, accumulates in the ring canals that interconnect cells of the germline cysts in males and the ovarian follicles in females. These structures develop from arrested contractile rings after a specialized cytokinesis in which the closing of the invaginating plasma membrane is incomplete. Also concentrates in the arrested cleavage furrows that initially link the oocyte to its 15 nurse cells in the early egg chamber and is subsequently lost from these furrows as germline cell division is completed.

The protein resides in the nucleus. The protein localises to the cytoplasm. It localises to the cytoskeleton. It is found in the cell cortex. Its subcellular location is the cell projection. The protein resides in the cilium. The protein localises to the flagellum. Required for cytokinesis. Essential for the structural integrity of the cleavage furrow and for completion of cleavage furrow ingression and proper formation of the midbody. Required during cellularization of syncytial embryos for the proper formation and function of the furrow canals, the stable inward folds of the plasma membrane which separate the peripheral nuclei. Also required for the formation of the pole cells, the progenitors of the adult germline which are formed by cytokinesis of the cytoplasmic buds at the posterior pole of the syncytial embryo. Essential for embryonic viability. The sequence is that of Anillin (scra) from Drosophila melanogaster (Fruit fly).